We begin with the raw amino-acid sequence, 225 residues long: Uracil-DNA glycosylase (225 aa).

Residue D64 is the Proton acceptor of the active site.

Belongs to the uracil-DNA glycosylase (UDG) superfamily. UNG family.

It localises to the cytoplasm. It carries out the reaction Hydrolyzes single-stranded DNA or mismatched double-stranded DNA and polynucleotides, releasing free uracil.. Its function is as follows. Excises uracil residues from the DNA which can arise as a result of misincorporation of dUMP residues by DNA polymerase or due to deamination of cytosine. The protein is Uracil-DNA glycosylase of Agathobacter rectalis (strain ATCC 33656 / DSM 3377 / JCM 17463 / KCTC 5835 / VPI 0990) (Eubacterium rectale).